The following is a 296-amino-acid chain: MGHLAILFSIIAVLNIATAVASSDSIYLKGHRVGQDIDSLYRVYDNGTMYPVTFNEWLNDLTGMNDLATNNATILKRDSSDVSCVTETCQYVDYHVDDEGVITIDISTYRIPVEWDSGSAGNASYGVSKRDTKYETFCKKKICGINVSGFCNAYDFAVHAFDFGGSVYNPVSGITDRIKEATKRDKTECLGYELDHVRIDPAVDWSISISTWKQGSANCDTQASADSLKCAAQKALESEHNHQKTAFCIHLDNGGSFNLDIRLISELSFSKYNPWALPCPKYKGSNSWQVVSDCFQ.

Residues 1–20 form the signal peptide; it reads MGHLAILFSIIAVLNIATAV. 4 N-linked (GlcNAc...) asparagine glycosylation sites follow: asparagine 46, asparagine 71, asparagine 122, and asparagine 146.

This sequence to yeast YER076C.

Functionally, kills sensitive strains of yeast. This is Killer toxin KHR (KHR1) from Saccharomyces cerevisiae (Baker's yeast).